The sequence spans 525 residues: Nucleolar complex protein 4 homolog (525 aa).

The next 3 membrane-spanning stretches (helical) occupy residues 305-325 (AAYD…FVPI), 356-376 (FFHL…LVAA), and 384-404 (LSLT…CNLI).

The protein belongs to the CBF/MAK21 family.

Its subcellular location is the nucleus membrane. The protein resides in the nucleus. The protein localises to the nucleolus. This Danio rerio (Zebrafish) protein is Nucleolar complex protein 4 homolog (noc4l).